A 128-amino-acid chain; its full sequence is Small ribosomal subunit protein uS11 (128 aa).

It belongs to the universal ribosomal protein uS11 family. In terms of assembly, part of the 30S ribosomal subunit. Interacts with proteins S7 and S18. Binds to IF-3.

Located on the platform of the 30S subunit, it bridges several disparate RNA helices of the 16S rRNA. Forms part of the Shine-Dalgarno cleft in the 70S ribosome. The chain is Small ribosomal subunit protein uS11 from Onion yellows phytoplasma (strain OY-M).